A 197-amino-acid chain; its full sequence is Probable GTP-binding protein EngB (197 aa).

Residues 26–197 (DLPEIALAGR…TSWDAILESL (172 aa)) form the EngB-type G domain. Residues 34–41 (GRSNVGKS), 61–65 (GKTQS), 79–82 (DVPG), 146–149 (TKAD), and 178–180 (FSS) each bind GTP. S41 and T63 together coordinate Mg(2+).

The protein belongs to the TRAFAC class TrmE-Era-EngA-EngB-Septin-like GTPase superfamily. EngB GTPase family. Mg(2+) serves as cofactor.

Its function is as follows. Necessary for normal cell division and for the maintenance of normal septation. In Streptococcus mutans serotype c (strain ATCC 700610 / UA159), this protein is Probable GTP-binding protein EngB.